Reading from the N-terminus, the 380-residue chain is Large ribosomal subunit protein mL38 (380 aa).

A mitochondrion-targeting transit peptide spans 1-26; the sequence is MAAPWWRAALCECRRWRGFSTSAVLG. A coiled-coil region spans residues 99–127; that stretch reads RTQQLLERKQAIQELRANVEEERAARLRT.

It belongs to the phosphatidylethanolamine-binding protein family. Mitochondrion-specific ribosomal protein mL38 subfamily. Component of the mitochondrial large ribosomal subunit (mt-LSU). Mature mammalian 55S mitochondrial ribosomes consist of a small (28S) and a large (39S) subunit. The 28S small subunit contains a 12S ribosomal RNA (12S mt-rRNA) and 30 different proteins. The 39S large subunit contains a 16S rRNA (16S mt-rRNA), a copy of mitochondrial valine transfer RNA (mt-tRNA(Val)), which plays an integral structural role, and 52 different proteins. mL38 is located at the central protuberance.

It localises to the mitochondrion. The polypeptide is Large ribosomal subunit protein mL38 (MRPL38) (Homo sapiens (Human)).